Here is a 394-residue protein sequence, read N- to C-terminus: Elongation factor Tu (394 aa).

The region spanning 10 to 204 (KPHVNVGTIG…ALDTYIPEPE (195 aa)) is the tr-type G domain. Residues 19–26 (GHVDHGKT) form a G1 region. GTP is bound at residue 19–26 (GHVDHGKT). Threonine 26 provides a ligand contact to Mg(2+). Residues 60 to 64 (GITIN) form a G2 region. The G3 stretch occupies residues 81–84 (DCPG). GTP is bound by residues 81 to 85 (DCPGH) and 136 to 139 (NKCD). A G4 region spans residues 136 to 139 (NKCD). The tract at residues 174 to 176 (SAL) is G5.

The protein belongs to the TRAFAC class translation factor GTPase superfamily. Classic translation factor GTPase family. EF-Tu/EF-1A subfamily. As to quaternary structure, monomer.

The protein localises to the cytoplasm. The catalysed reaction is GTP + H2O = GDP + phosphate + H(+). GTP hydrolase that promotes the GTP-dependent binding of aminoacyl-tRNA to the A-site of ribosomes during protein biosynthesis. This is Elongation factor Tu from Shewanella denitrificans (strain OS217 / ATCC BAA-1090 / DSM 15013).